Reading from the N-terminus, the 280-residue chain is Chaperone for lacto-N-biosidase (280 aa).

The first 37 residues, 1-37, serve as a signal peptide directing secretion; that stretch reads MPRRHRFAAAIAAVAVAAVLLVTLTVAVVTHGDGAFA.

As to quaternary structure, homodimer.

The protein localises to the secreted. In terms of biological role, chaperone required for active expression of the lacto-N-biosidase LnbX. This Bifidobacterium longum subsp. longum (strain ATCC 15707 / DSM 20219 / JCM 1217 / NCTC 11818 / E194b) protein is Chaperone for lacto-N-biosidase.